The chain runs to 317 residues: GTP cyclohydrolase MptA (317 aa).

It belongs to the GTP cyclohydrolase IV family. Homodimer. Fe(2+) is required as a cofactor.

It catalyses the reaction GTP + H2O = 7,8-dihydroneopterin 2',3'-cyclic phosphate + formate + diphosphate + H(+). Its pathway is cofactor biosynthesis; 5,6,7,8-tetrahydromethanopterin biosynthesis. Its function is as follows. Converts GTP to 7,8-dihydro-D-neopterin 2',3'-cyclic phosphate, the first intermediate in the biosynthesis of coenzyme methanopterin. The protein is GTP cyclohydrolase MptA of Methanococcoides burtonii (strain DSM 6242 / NBRC 107633 / OCM 468 / ACE-M).